Here is a 430-residue protein sequence, read N- to C-terminus: GTPase Obg (430 aa).

An Obg domain is found at M1 to L158. The segment at K118–P145 is disordered. The region spanning A159 to E329 is the OBG-type G domain. GTP-binding positions include G165–S172, F190–K194, D212–G215, N282–D285, and S310–I312. Mg(2+)-binding residues include S172 and T192. Residues K352 to E430 form the OCT domain.

Belongs to the TRAFAC class OBG-HflX-like GTPase superfamily. OBG GTPase family. Monomer. Requires Mg(2+) as cofactor.

It localises to the cytoplasm. Its function is as follows. An essential GTPase which binds GTP, GDP and possibly (p)ppGpp with moderate affinity, with high nucleotide exchange rates and a fairly low GTP hydrolysis rate. Plays a role in control of the cell cycle, stress response, ribosome biogenesis and in those bacteria that undergo differentiation, in morphogenesis control. In Staphylococcus aureus (strain MRSA252), this protein is GTPase Obg.